The following is an 816-amino-acid chain: Coiled-coil and C2 domain-containing protein 1-like (816 aa).

Basic and acidic residues predominate over residues 1–11 (MFSRKKPEPAK). Disordered regions lie at residues 1-135 (MFSR…TFLP), 157-176 (ANAKTAGDSGKARRFGRGLK), and 186-269 (AAGK…RQTD). Residues 25–47 (IPDDFDPSAGYGEDDGGDSDLEA) are compositionally biased toward acidic residues. Positions 73–85 (DLDKMIADSLRDV) are enriched in basic and acidic residues. A compositionally biased stretch (acidic residues) spans 86 to 100 (SDDDDDDNLESDPDL). The span at 122-131 (PPAASEEPVQ) shows a compositional bias: low complexity. Residues 145–200 (IKQRLEMYKQAEANAKTAGDSGKARRFGRGLKTLKDLHRQAAAGKSINVDDIPPEV) form a DM14 1 region. The span at 220–243 (PSTPASPPPVPSRAAPDPPTPGTP) shows a compositional bias: pro residues. DM14 stretches follow at residues 265 to 317 (SRQT…MPPP) and 365 to 419 (LQQR…LPVP). Residues 355–382 (LAAATNMLEALQQRLEKYQSVEAAAKAE) adopt a coiled-coil conformation. Positions 418-492 (VPPGFGPLPT…TRTSGNQQKN (75 aa)) are disordered. Positions 424 to 433 (PLPTADAAPV) are enriched in low complexity. Residues 434-449 (APTPSLPTSPTSPPPT) are compositionally biased toward pro residues. The segment covering 450-471 (ASTSAGGTPSSSSATTPTAPRK) has biased composition (low complexity). Residues 483 to 492 (TRTSGNQQKN) are compositionally biased toward polar residues. Positions 502 to 556 (LLERQKEFKLAAIEAKKAGEIDQAKEYLKIFKGFDSLLNAASSGLPVDLSTLPVP) are DM14 4. The C2 domain maps to 637–776 (RKNEPLPKFH…ETKCEIHDTY (140 aa)).

The protein belongs to the CC2D1 family. Interacts (via DM14 domains 1 and 3) with shrb; the interaction is direct and blocks access to the surface involved in shrb polymerization. This interaction may be required for the ESCRT-III complex role in multivesicular body formation.

It localises to the cytoplasm. It is found in the cytosol. The protein localises to the apicolateral cell membrane. Its subcellular location is the cell cortex. The protein resides in the endosome. Functionally, phosphatidyl inositol monophosphate binding protein involved in endosomal protein sorting through regulation of the endosomal sorting required for transport (ESCRT) pathway. Required for full activity of the ESCRT-III complex core component shrb/shrub, probably by preventing its inappropriate polymerisation. Required, but not essential, for the efficient generation of intraluminal vesicles (ILVs) in multivesicular bodies (MVBs). Involved in a late stage of the endosomal pathway targeting transmembrane proteins of the plasma membrane for lysosomal degradation. Plays a critical role in regulation of multiple signal transduction pathways, including the Notch and BMP/decapentaplegic (dpp) signaling pathways, through targeting of membrane bound receptors to multivesicular bodies, isolating them from the cytoplasm and targeting them for lysosomal degradation. Involved in targeting N/Notch for endosomal degradation, negatively regulating the Notch signaling pathway. Regulates Notch signaling in imaginal disk cells and follicle cells during oogenesis and multiple developmental processes, including development of wings, veins, legs, eyes and bristles. Restricts the activity of Notch to the dorsoventral (D/V) boundary of the wing imaginal disk. In external sensory organ development regulates Notch signaling during asymmetric cell division and differentiation of sensory organ precursor cells. May be involved in regulation of apoptosis and cell growth independent of Notch signaling. Involved in targeting tkv for endosomal degradation, negatively regulating the BMP/decapentaplegic (dpp) signaling pathway. Regulates the BMP/dpp signaling pathway in follicle cells during oogenesis, but not in imaginal disk cells during wing development. May be involved in differentiation or morphogenesis of peripodial epithelial cells in the developing imaginal disk. Involved in abscission of germline cells during oogenesis. The chain is Coiled-coil and C2 domain-containing protein 1-like from Drosophila melanogaster (Fruit fly).